A 321-amino-acid polypeptide reads, in one-letter code: Cytochrome c biogenesis protein CcsA (321 aa).

6 helical membrane-spanning segments follow: residues 17–37, 43–63, 143–163, 225–245, 258–275, and 287–307; these read IISIVITIQLIDLLVYQIVGI, KGIIATFFCITGLLITRWIYS, MLLSYAALLCGALLSVAFLVI, VISLGFIFSTIGILSGAVWAN, ETWAFITWTIFAIYLHTR, and IVASIGFLIIWICYFGVNLLG.

The protein belongs to the CcmF/CycK/Ccl1/NrfE/CcsA family. In terms of assembly, may interact with Ccs1.

It localises to the plastid. The protein resides in the chloroplast thylakoid membrane. Required during biogenesis of c-type cytochromes (cytochrome c6 and cytochrome f) at the step of heme attachment. This chain is Cytochrome c biogenesis protein CcsA, found in Drimys granadensis.